The primary structure comprises 620 residues: Putative ribonuclease H protein At1g65750 (620 aa).

Residues 456-586 (CVGWVKVNTD…ADGLANYAFS (131 aa)) enclose the RNase H type-1 domain. Residues Asp465, Glu505, Asp529, and Asp578 each coordinate Mg(2+).

Requires Mg(2+) as cofactor.

The enzyme catalyses Endonucleolytic cleavage to 5'-phosphomonoester.. The polypeptide is Putative ribonuclease H protein At1g65750 (Arabidopsis thaliana (Mouse-ear cress)).